Reading from the N-terminus, the 452-residue chain is Trigger factor (452 aa).

Positions 171 to 256 (GDRVTISFKG…ATKVEAPQDT (86 aa)) constitute a PPIase FKBP-type domain.

This sequence belongs to the FKBP-type PPIase family. Tig subfamily.

The protein localises to the cytoplasm. It carries out the reaction [protein]-peptidylproline (omega=180) = [protein]-peptidylproline (omega=0). Functionally, involved in protein export. Acts as a chaperone by maintaining the newly synthesized protein in an open conformation. Functions as a peptidyl-prolyl cis-trans isomerase. This chain is Trigger factor, found in Rhodopseudomonas palustris (strain HaA2).